The chain runs to 103 residues: Small ribosomal subunit protein uS10 (103 aa).

Belongs to the universal ribosomal protein uS10 family. Part of the 30S ribosomal subunit.

Its function is as follows. Involved in the binding of tRNA to the ribosomes. The chain is Small ribosomal subunit protein uS10 from Chromobacterium violaceum (strain ATCC 12472 / DSM 30191 / JCM 1249 / CCUG 213 / NBRC 12614 / NCIMB 9131 / NCTC 9757 / MK).